Reading from the N-terminus, the 433-residue chain is MSLNDDATFWRNARQHLVRYGGTFEPMIIERAKGSFVYDADGRAILDFTSGQMSAVLGHCHPEIVSVIGEYAGKLDHLFSGMLSRPVVDLATRLANITPPGLDRALLLSTGAESNEAAIRMAKLVTGKYEIVGFAQSWHGMTGAAASATYSAGRKGVGPAAVGSFAIPAPFTYRPRFERNGAYDYLAELDYAFDLIDRQSSGNLAAFIAEPILSSGGIIELPDGYMAALKRKCEARGMLLILDEAQTGVGRTGTMFACQRDGVTPDILTLSKTLGAGLPLAAIVTSAAIEERAHELGYLFYTTHVSDPLPAAVGLRVLDVVQRDGLVARANVMGDRLRRGLLDLMERFDCIGDVRGRGLLLGVEIVKDRRTKEPADGLGAKITRECMNLGLSMNIVQLPGMGGVFRIAPPLTVSEDEIDLGLSLLGQAIERAL.

Residue Lys-272 is modified to N6-(pyridoxal phosphate)lysine.

This sequence belongs to the class-III pyridoxal-phosphate-dependent aminotransferase family. Homotetramer. Requires pyridoxal 5'-phosphate as cofactor.

The catalysed reaction is 2,2-dialkylglycine + pyruvate + H(+) = dialkyl ketone + L-alanine + CO2. The dialkylglycine decarboxylase is of interest because it normally catalyzes both decarboxylation and amino transfer. It may be more properly described as a decarboxylating aminotransferase rather than an aminotransferring decarboxylase. In Burkholderia cepacia (Pseudomonas cepacia), this protein is 2,2-dialkylglycine decarboxylase (dgdA).